We begin with the raw amino-acid sequence, 101 residues long: Movement protein (101 aa).

The chain crosses the membrane as a helical span at residues Glu30–Leu50. Residues Arg78 to Gly101 are disordered. The span at Pro90–Gly101 shows a compositional bias: pro residues.

It belongs to the mastrevirus movement protein family. Interacts with the capsid protein (CP). Part of a MP-CP-viral DNA complex.

The protein localises to the host membrane. Its function is as follows. Involved in the viral transport within, and between cells. The protein is Movement protein of Maize streak virus genotype E (isolate Pat) (MSV).